The primary structure comprises 2167 residues: Glutamate synthase 1 [NADH], chloroplastic (2167 aa).

Residues 1–31 (MSAAQGMAYKLRTDAAPTGAGRRARRSHSSV) are disordered. The N-terminal 36 residues, 1 to 36 (MSAAQGMAYKLRTDAAPTGAGRRARRSHSSVAAPYR), are a transit peptide targeting the chloroplast. Residue Cys-100 is the Nucleophile of the active site. The 405-residue stretch at 100–504 (CGVGFVAELS…PGMMLLVDFE (405 aa)) folds into the Glutamine amidotransferase type-2 domain. The disordered stretch occupies residues 1022-1042 (KSNTGEGGEQPSRMEPLANGS). 1192–1249 (LAETHQTLVANGLRGRAILQTDGQLKTGKDVAVACLLGAEEFGFSTAPLITLGCIMMR) contacts FMN. [3Fe-4S] cluster-binding residues include Cys-1245, Cys-1251, and Cys-1256. An NAD(+)-binding site is contributed by 1956–1970 (GGGDTGTDCIGTSIR).

The protein belongs to the glutamate synthase family. In terms of assembly, monomer. The cofactor is [3Fe-4S] cluster. It depends on FAD as a cofactor. FMN serves as cofactor. Highly expressed in roots.

It localises to the plastid. It is found in the chloroplast. It carries out the reaction 2 L-glutamate + NAD(+) = L-glutamine + 2-oxoglutarate + NADH + H(+). It functions in the pathway amino-acid biosynthesis; L-glutamate biosynthesis via GLT pathway; L-glutamate from 2-oxoglutarate and L-glutamine (NAD(+) route): step 1/1. It participates in energy metabolism; nitrogen metabolism. Involved in glutamate biosynthesis and plays a major role in the primary ammonium ions assimilation in seedling roots. May be involved in the reutilization of glutamine in developing organs. Plays a role in the development of tillers. In Oryza sativa subsp. japonica (Rice), this protein is Glutamate synthase 1 [NADH], chloroplastic.